Here is a 244-residue protein sequence, read N- to C-terminus: tRNA pseudouridine synthase A (244 aa).

The active-site Nucleophile is Asp52. Tyr110 provides a ligand contact to substrate.

Belongs to the tRNA pseudouridine synthase TruA family. As to quaternary structure, homodimer.

It catalyses the reaction uridine(38/39/40) in tRNA = pseudouridine(38/39/40) in tRNA. Formation of pseudouridine at positions 38, 39 and 40 in the anticodon stem and loop of transfer RNAs. The sequence is that of tRNA pseudouridine synthase A from Clostridium kluyveri (strain ATCC 8527 / DSM 555 / NBRC 12016 / NCIMB 10680 / K1).